The chain runs to 167 residues: Gem-associated protein 6 (167 aa).

A Sm domain is found at 7-74 (KGPLEWQDYI…VQTVETMNEG (68 aa)). In terms of domain architecture, AD spans 69–167 (ETMNEGDHRV…LIEGHLTASQ (99 aa)). Phosphoserine is present on residues Ser-95 and Ser-166.

In terms of assembly, part of the core SMN complex that contains SMN1, GEMIN2/SIP1, DDX20/GEMIN3, GEMIN4, GEMIN5, GEMIN6, GEMIN7, GEMIN8 and STRAP/UNRIP. Part of the SMN-Sm complex that contains SMN1, GEMIN2/SIP1, DDX20/GEMIN3, GEMIN4, GEMIN5, GEMIN6, GEMIN7, GEMIN8, STRAP/UNRIP and the Sm proteins SNRPB, SNRPD1, SNRPD2, SNRPD3, SNRPE, SNRPF and SNRPG. Interacts with GEMIN7; the interaction is direct. Interacts with GEMIN8; the interaction is direct. Interacts with SNRPB, SNRPD2, SNRPD3 and SNRPE; the interaction is direct.

It is found in the nucleus. The protein resides in the nucleoplasm. The protein localises to the gem. It localises to the cytoplasm. In terms of biological role, the SMN complex catalyzes the assembly of small nuclear ribonucleoproteins (snRNPs), the building blocks of the spliceosome, and thereby plays an important role in the splicing of cellular pre-mRNAs. Most spliceosomal snRNPs contain a common set of Sm proteins SNRPB, SNRPD1, SNRPD2, SNRPD3, SNRPE, SNRPF and SNRPG that assemble in a heptameric protein ring on the Sm site of the small nuclear RNA to form the core snRNP (Sm core). In the cytosol, the Sm proteins SNRPD1, SNRPD2, SNRPE, SNRPF and SNRPG are trapped in an inactive 6S pICln-Sm complex by the chaperone CLNS1A that controls the assembly of the core snRNP. To assemble core snRNPs, the SMN complex accepts the trapped 5Sm proteins from CLNS1A forming an intermediate. Binding of snRNA inside 5Sm triggers eviction of the SMN complex, thereby allowing binding of SNRPD3 and SNRPB to complete assembly of the core snRNP. The protein is Gem-associated protein 6 (GEMIN6) of Homo sapiens (Human).